The primary structure comprises 152 residues: Cornifin-A (152 aa).

Positions 20–40 (EVKQPCQPPPQEPCAPKTKEP) are disordered. 14 repeat units span residues 27-34 (PPPQEPCA), 35-42 (PKTKEPCH), 43-49 (PIPEPCN), 50-57 (PKVPEPCQ), 58-65 (PKVPEPCQ), 66-73 (PKVPEPCQ), 74-81 (PKVPEPCQ), 82-89 (PKVPEPCQ), 90-97 (PKVPEPCQ), 98-105 (PKVPEPCH), 106-113 (PKAPEPCH), 114-121 (PVVPEPCQ), 122-129 (PVAPEPCQ), and 130-137 (PVVPEPCP). Residues 27–137 (PPPQEPCAPK…CQPVVPEPCP (111 aa)) form a 14 X 8 AA approximate tandem repeats region.

Belongs to the cornifin (SPRR) family. In squamous epithelia lining the nasal vestibule and in the hard palate.

The protein localises to the cytoplasm. In terms of biological role, cross-linked envelope protein of keratinocytes. It is a keratinocyte protein that first appears in the cell cytosol, but ultimately becomes cross-linked to membrane proteins by transglutaminase. All that results in the formation of an insoluble envelope beneath the plasma membrane. This Rattus norvegicus (Rat) protein is Cornifin-A (Sprr1a).